Consider the following 184-residue polypeptide: Probable cobalt-precorrin-6B C(15)-methyltransferase (decarboxylating) (184 aa).

Residues threonine 12, 36 to 40 (GCGTG), aspartate 59, and alanine 87 each bind S-adenosyl-L-methionine.

The protein belongs to the methyltransferase superfamily. Archaeal-type CbiT family.

It carries out the reaction Co-precorrin-6B + S-adenosyl-L-methionine = Co-precorrin-7 + S-adenosyl-L-homocysteine + CO2. Its pathway is cofactor biosynthesis; adenosylcobalamin biosynthesis; cob(II)yrinate a,c-diamide from sirohydrochlorin (anaerobic route): step 8/10. In terms of biological role, catalyzes the methylation of C-15 in cobalt-precorrin-6B followed by the decarboxylation of C-12 to form cobalt-precorrin-7. The chain is Probable cobalt-precorrin-6B C(15)-methyltransferase (decarboxylating) from Methanosarcina acetivorans (strain ATCC 35395 / DSM 2834 / JCM 12185 / C2A).